Consider the following 36-residue polypeptide: Photosystem I reaction center subunit VIII (36 aa).

The chain crosses the membrane as a helical span at residues 6–28 (LPSIFVPXVGLVFPAIAMASXFL).

The protein belongs to the PsaI family.

It is found in the plastid. The protein localises to the chloroplast thylakoid membrane. Functionally, may help in the organization of the PsaL subunit. The sequence is that of Photosystem I reaction center subunit VIII from Acorus gramineus (Dwarf sweet flag).